Consider the following 117-residue polypeptide: Large ribosomal subunit protein bL20 (117 aa).

The protein belongs to the bacterial ribosomal protein bL20 family.

In terms of biological role, binds directly to 23S ribosomal RNA and is necessary for the in vitro assembly process of the 50S ribosomal subunit. It is not involved in the protein synthesizing functions of that subunit. This chain is Large ribosomal subunit protein bL20, found in Vibrio cholerae serotype O1 (strain ATCC 39541 / Classical Ogawa 395 / O395).